The following is a 386-amino-acid chain: Protein DOM34 (386 aa).

It belongs to the eukaryotic release factor 1 family. Pelota subfamily. As to quaternary structure, monomer. Component of the Dom34-Hbs1 complex, also named Pelota-HBS1L complex, composed of DOM34 and HBS1. The cofactor is a divalent metal cation.

It localises to the cytoplasm. Component of the Dom34-Hbs1 complex, a complex that recognizes stalled ribosomes and triggers the No-Go Decay (NGD) pathway. In the Dom34-Hbs1 complex, DOM34 recognizes ribosomes stalled at the 3' end of an mRNA and engages stalled ribosomes by destabilizing mRNA in the mRNA channel. Following ribosome-binding, the Dom34-Hbs1 complex promotes the disassembly of stalled ribosomes, followed by degradation of damaged mRNAs as part of the NGD pathway. The Dom34-Hbs1 complex is also involved in non-functional rRNA decay. The polypeptide is Protein DOM34 (Saccharomyces cerevisiae (strain ATCC 204508 / S288c) (Baker's yeast)).